The chain runs to 101 residues: Small ribosomal subunit protein uS14 (101 aa).

The protein belongs to the universal ribosomal protein uS14 family. As to quaternary structure, part of the 30S ribosomal subunit. Contacts proteins S3 and S10.

Its function is as follows. Binds 16S rRNA, required for the assembly of 30S particles and may also be responsible for determining the conformation of the 16S rRNA at the A site. This Aliivibrio salmonicida (strain LFI1238) (Vibrio salmonicida (strain LFI1238)) protein is Small ribosomal subunit protein uS14.